Consider the following 131-residue polypeptide: uncharacterized protein (131 aa).

Positions 13-32 (TYSPLPEPPPTPALGGQRGP) are disordered.

This is an uncharacterized protein from Homo sapiens (Human).